The chain runs to 244 residues: DNA repair protein RecO (244 aa).

This sequence belongs to the RecO family.

Involved in DNA repair and RecF pathway recombination. This is DNA repair protein RecO from Ehrlichia chaffeensis (strain ATCC CRL-10679 / Arkansas).